The primary structure comprises 290 residues: Acetylglutamate kinase (290 aa).

Substrate contacts are provided by residues 60–61 (GG), Arg82, and Asn185.

Belongs to the acetylglutamate kinase family. ArgB subfamily.

The protein resides in the cytoplasm. It carries out the reaction N-acetyl-L-glutamate + ATP = N-acetyl-L-glutamyl 5-phosphate + ADP. It participates in amino-acid biosynthesis; L-arginine biosynthesis; N(2)-acetyl-L-ornithine from L-glutamate: step 2/4. Catalyzes the ATP-dependent phosphorylation of N-acetyl-L-glutamate. This is Acetylglutamate kinase from Archaeoglobus fulgidus (strain ATCC 49558 / DSM 4304 / JCM 9628 / NBRC 100126 / VC-16).